The following is a 591-amino-acid chain: uncharacterized protein (591 aa).

The N-terminal stretch at 1 to 30 is a signal peptide; it reads MGKLLFGKLVFKKSLFLLSGMSSLAVFLTA. The N-palmitoyl cysteine moiety is linked to residue Cys31. Cys31 carries the S-diacylglycerol cysteine lipid modification. Over residues 476 to 488 the composition is skewed to basic and acidic residues; it reads KKKLSEVATKKNE. 2 disordered regions span residues 476 to 497 and 510 to 535; these read KKKL…NGSN and SSSS…DNDG. The span at 510–523 shows a compositional bias: low complexity; it reads SSSSTSMRNGSSDS.

This sequence to T.pallidum TmpC.

The protein localises to the cell membrane. This is an uncharacterized protein from Mycoplasma genitalium (strain ATCC 33530 / DSM 19775 / NCTC 10195 / G37) (Mycoplasmoides genitalium).